Consider the following 341-residue polypeptide: Methionine import ATP-binding protein MetN (341 aa).

Residues 2 to 237 enclose the ABC transporter domain; the sequence is IELCGLKKSF…PESLARKMLY (236 aa). 34-41 contributes to the ATP binding site; that stretch reads GKSGAGKS.

The protein belongs to the ABC transporter superfamily. Methionine importer (TC 3.A.1.24) family. In terms of assembly, the complex is composed of two ATP-binding proteins (MetN), two transmembrane proteins (MetI) and a solute-binding protein (MetQ).

The protein localises to the cell inner membrane. It carries out the reaction L-methionine(out) + ATP + H2O = L-methionine(in) + ADP + phosphate + H(+). The enzyme catalyses D-methionine(out) + ATP + H2O = D-methionine(in) + ADP + phosphate + H(+). Its function is as follows. Part of the ABC transporter complex MetNIQ involved in methionine import. Responsible for energy coupling to the transport system. The chain is Methionine import ATP-binding protein MetN from Legionella pneumophila (strain Paris).